A 191-amino-acid polypeptide reads, in one-letter code: Large ribosomal subunit protein uL3 (191 aa).

Positions 115-137 (GGPASHGSRFHRRHGSIGNREWP) are disordered.

The protein belongs to the universal ribosomal protein uL3 family. In terms of assembly, part of the 50S ribosomal subunit. Forms a cluster with proteins L14 and L19.

Functionally, one of the primary rRNA binding proteins, it binds directly near the 3'-end of the 23S rRNA, where it nucleates assembly of the 50S subunit. In Campylobacter jejuni subsp. jejuni serotype O:2 (strain ATCC 700819 / NCTC 11168), this protein is Large ribosomal subunit protein uL3 (rplC).